Reading from the N-terminus, the 362-residue chain is Putative transport protein BB_0006 (362 aa).

The next 8 helical transmembrane spans lie at 20–40 (FYCI…EAVF), 43–63 (LAIS…LARF), 68–88 (FLIV…IFSF), 144–164 (EIIG…FLLS), 212–232 (ILVF…WAVL), 234–254 (FVFN…IVIT), 265–285 (IVLY…NILE), and 304–326 (LFFW…TVIV).

Belongs to the autoinducer-2 exporter (AI-2E) (TC 2.A.86) family.

Its subcellular location is the cell membrane. The polypeptide is Putative transport protein BB_0006 (Borreliella burgdorferi (strain ATCC 35210 / DSM 4680 / CIP 102532 / B31) (Borrelia burgdorferi)).